The primary structure comprises 629 residues: tRNA uridine 5-carboxymethylaminomethyl modification enzyme MnmG (629 aa).

FAD contacts are provided by residues Gly13–Gly18, Val125, and Ser180. Gly273–Phe287 is an NAD(+) binding site. An FAD-binding site is contributed by Gln370.

Belongs to the MnmG family. Homodimer. Heterotetramer of two MnmE and two MnmG subunits. FAD serves as cofactor.

The protein resides in the cytoplasm. NAD-binding protein involved in the addition of a carboxymethylaminomethyl (cmnm) group at the wobble position (U34) of certain tRNAs, forming tRNA-cmnm(5)s(2)U34. This chain is tRNA uridine 5-carboxymethylaminomethyl modification enzyme MnmG, found in Salmonella choleraesuis (strain SC-B67).